The primary structure comprises 458 residues: UDP-N-acetylglucosamine 1-carboxyvinyltransferase (458 aa).

22 to 23 is a phosphoenolpyruvate binding site; that stretch reads KN. UDP-N-acetyl-alpha-D-glucosamine is bound at residue Arg94. The active-site Proton donor is Asp119. 2 residues coordinate UDP-N-acetyl-alpha-D-glucosamine: Asp309 and Val331.

Belongs to the EPSP synthase family. MurA subfamily.

It is found in the cytoplasm. The catalysed reaction is phosphoenolpyruvate + UDP-N-acetyl-alpha-D-glucosamine = UDP-N-acetyl-3-O-(1-carboxyvinyl)-alpha-D-glucosamine + phosphate. Its pathway is cell wall biogenesis; peptidoglycan biosynthesis. In terms of biological role, cell wall formation. Adds enolpyruvyl to UDP-N-acetylglucosamine. This Chlamydia pneumoniae (Chlamydophila pneumoniae) protein is UDP-N-acetylglucosamine 1-carboxyvinyltransferase.